A 590-amino-acid chain; its full sequence is Multidrug and toxin extrusion protein 1 (590 aa).

The Cytoplasmic segment spans residues 1–59; that stretch reads MDSITSYNVTQMNGDTKQEKCDDVLSTSSTQKFCGGCRKKLRSLLPVNYKTEIVELLKL. A helical membrane pass occupies residues 60–80; that stretch reads AGPVFISQLMIFLISFVSTVF. Topologically, residues 81–88 are extracellular; the sequence is CGHLGKTE. Residues 89-109 traverse the membrane as a helical segment; that stretch reads LAGVALAIAVINVTGISIGSG. The Cytoplasmic portion of the chain corresponds to 110-137; that stretch reads LASACDTLISQTFGSNNLKRVGVILQRG. The chain crosses the membrane as a helical span at residues 138–158; sequence ILILLLACFPCWALLINTEPI. Residues 159–167 lie on the Extracellular side of the membrane; sequence LLAVRQSPN. A helical membrane pass occupies residues 168-188; sequence VASLSQLYVKIFMPALPAAFM. The Cytoplasmic portion of the chain corresponds to 189 to 199; it reads YQLQGRYLQNQ. Residues 200–222 form a helical membrane-spanning segment; sequence GIIWPQVITGAAGNILNALINYV. Residues 223 to 231 lie on the Extracellular side of the membrane; that stretch reads FLHLLELGV. A helical transmembrane segment spans residues 232 to 254; sequence AGSAAANTISQYSLAVFLYVYIR. Over 255-274 the chain is Cytoplasmic; sequence WKNLHKATWDGWSRDCLQEW. A helical transmembrane segment spans residues 275–294; the sequence is GAFIRLALPSMLMLCVEWWT. The Extracellular segment spans residues 295-313; that stretch reads YEIGGFLAGLISETELGAQ. Residues 314–334 form a helical membrane-spanning segment; that stretch reads SVVYELATIAYMFPLGFAVAA. The Cytoplasmic portion of the chain corresponds to 335–351; sequence SVRVGNALGAGNTERAK. A helical transmembrane segment spans residues 352 to 372; that stretch reads LSAKVALVCGVLVSCVVATLI. Topologically, residues 373–395 are extracellular; the sequence is GCTKDVIAYIFTTEEEIVSRVSQ. Residues 396–416 traverse the membrane as a helical segment; the sequence is VMIMYGFFHLFDAIAGITGGI. The Cytoplasmic segment spans residues 417-430; it reads VRGAGKQLLGALCN. The helical transmembrane segment at 431–451 threads the bilayer; it reads IVGYYFVGFPTGVSLMFALSM. A topological domain (extracellular) is located at residue Gly-452. The chain crosses the membrane as a helical span at residues 453–473; that stretch reads IIGLWIGFFGCVFLQSLFFII. Residues 474–565 lie on the Cytoplasmic side of the membrane; the sequence is LIYKLDWKKA…TTKQLIVRRG (92 aa). A helical membrane pass occupies residues 566–586; sequence LAVLLMVLILAGGIVLNEMLV. The Extracellular portion of the chain corresponds to 587 to 590; that stretch reads RYLR.

It belongs to the multi antimicrobial extrusion (MATE) (TC 2.A.66.1) family.

Its subcellular location is the cell membrane. Functionally, solute transporter for tetraethylammonium (TEA), cimetidine, metformin, guanidine, N-methylnicotinamide (NMN) and also the zwitterionic cephalosporin cephalexin. Responsible for the secretion of cationic drugs across the brush border membranes. This Danio rerio (Zebrafish) protein is Multidrug and toxin extrusion protein 1 (slc47a1).